The chain runs to 441 residues: CBL-interacting serine/threonine-protein kinase 3 (441 aa).

Residues 14 to 269 (YEVGRTIGEG…PQEVFEDEWF (256 aa)) enclose the Protein kinase domain. ATP is bound by residues 20 to 28 (IGEGTFAKV) and K43. D137 (proton acceptor) is an active-site residue. An activation loop region spans residues 155–184 (DFGLSALSQQVRDDGLLHTSCGTPNYVAPE). In terms of domain architecture, NAF spans 307 to 331 (EQPAAINAFEIISMSRGLNLENLFD). Positions 337-366 (KRETRITLRGGANEIIEKIEEAAKPLGFDV) are PPI.

This sequence belongs to the protein kinase superfamily. CAMK Ser/Thr protein kinase family. SNF1 subfamily. As to quaternary structure, interacts with CBL3 and CBL9. Mn(2+) serves as cofactor. As to expression, mostly expressed in germinating seeds and young seedlings. Detected at low levels in roots, stems, leaves and flowers.

The catalysed reaction is L-seryl-[protein] + ATP = O-phospho-L-seryl-[protein] + ADP + H(+). It carries out the reaction L-threonyl-[protein] + ATP = O-phospho-L-threonyl-[protein] + ADP + H(+). Involved in the resistance to some abiotic stresses (e.g. high salt, hyperosmotic stress) in young seedlings, by regulating the expression of several stress-inducible genes (cold- and salt-induced genes but not drought-responsive genes). Required for the ABA response during germination. CIPK serine-threonine protein kinases interact with CBL proteins. Binding of a CBL protein to the regulatory NAF domain of CIPK protein lead to the activation of the kinase in a calcium-dependent manner. The CBL9/CIPK3 complex acts in the regulation of abscisic acid response in seed germination. This chain is CBL-interacting serine/threonine-protein kinase 3 (CIPK3), found in Arabidopsis thaliana (Mouse-ear cress).